A 270-amino-acid chain; its full sequence is UPF0354 protein Bcer98_3354 (270 aa).

This sequence belongs to the UPF0354 family.

This is UPF0354 protein Bcer98_3354 from Bacillus cytotoxicus (strain DSM 22905 / CIP 110041 / 391-98 / NVH 391-98).